We begin with the raw amino-acid sequence, 137 residues long: Peptide methionine sulfoxide reductase MsrB (137 aa).

The MsrB domain occupies 7–129; the sequence is AEELKKNLSE…NSASLRFTDG (123 aa). 4 residues coordinate Zn(2+): Cys-46, Cys-49, Cys-95, and Cys-98. Cys-118 (nucleophile) is an active-site residue.

This sequence belongs to the MsrB Met sulfoxide reductase family. It depends on Zn(2+) as a cofactor.

It carries out the reaction L-methionyl-[protein] + [thioredoxin]-disulfide + H2O = L-methionyl-(R)-S-oxide-[protein] + [thioredoxin]-dithiol. This Escherichia coli O8 (strain IAI1) protein is Peptide methionine sulfoxide reductase MsrB.